Here is a 494-residue protein sequence, read N- to C-terminus: 3-octaprenyl-4-hydroxybenzoate carboxy-lyase (494 aa).

Position 172 (asparagine 172) interacts with Mn(2+). Prenylated FMN-binding positions include 175-177 (IYR), 189-191 (RWL), and 194-195 (RG). Glutamate 238 is a Mn(2+) binding site. Aspartate 294 (proton donor) is an active-site residue.

The protein belongs to the UbiD family. As to quaternary structure, homohexamer. Prenylated FMN is required as a cofactor. It depends on Mn(2+) as a cofactor.

Its subcellular location is the cell membrane. The enzyme catalyses a 4-hydroxy-3-(all-trans-polyprenyl)benzoate + H(+) = a 2-(all-trans-polyprenyl)phenol + CO2. It functions in the pathway cofactor biosynthesis; ubiquinone biosynthesis. Its function is as follows. Catalyzes the decarboxylation of 3-octaprenyl-4-hydroxy benzoate to 2-octaprenylphenol, an intermediate step in ubiquinone biosynthesis. The polypeptide is 3-octaprenyl-4-hydroxybenzoate carboxy-lyase (Janthinobacterium sp. (strain Marseille) (Minibacterium massiliensis)).